A 758-amino-acid chain; its full sequence is Spastin (758 aa).

The tract at residues 1-103 is disordered; it reads MVRTKNQSSS…SPRSGHHHSY (103 aa). Residues 1–121 are Cytoplasmic-facing; the sequence is MVRTKNQSSS…KQNLYVVSFP (121 aa). Positions 1–159 are interaction with atl; sequence MVRTKNQSSS…VIYRPHRRDC (159 aa). The tract at residues 1–210 is required for localization to punctate cytoplasmic foci; sequence MVRTKNQSSS…RPIQPLEMAA (210 aa). 4 stretches are compositionally biased toward low complexity: residues 8-28, 43-58, 66-76, and 85-95; these read SSSS…SSGA, RSSS…AGGS, SSNRRSPGSSP, and TDDLTPTTCSP. An intramembrane region (helical) is located at residues 122-142; sequence IIFLFNVLRSLIYQLFCIFRY. Topologically, residues 143–758 are cytoplasmic; it reads LYGASTKVIY…WSQDYGDITI (616 aa). 2 stretches are compositionally biased toward polar residues: residues 169–180 and 189–198; these read SKEQQQSLNHPS and QEQQLSNQPQ. Residues 169–202 form a disordered region; the sequence is SKEQQQSLNHPSELNREGDGQEQQLSNQPQRFRP. A sufficient for interaction with microtubules and microtubule severing region spans residues 208–758; sequence MAANRPGGGY…WSQDYGDITI (551 aa). In terms of domain architecture, MIT spans 233 to 308; sequence HRRAFEYISK…SMARDRLHFL (76 aa). The interval 353–454 is disordered; the sequence is RVRSSGYGPK…GPSGSGASTP (102 aa). 2 stretches are compositionally biased toward polar residues: residues 390–406 and 425–454; these read NKSQ…TSVG and QFSS…ASTP. The residue at position 439 (threonine 439) is a Phosphothreonine. The required for interaction with microtubules stretch occupies residues 443–455; that stretch reads NNGPSGSGASTPV. Position 523–530 (523–530) interacts with ATP; sequence GPPGNGKT.

It belongs to the AAA ATPase family. Spastin subfamily. Homohexamer. The homohexamer is stabilized by ATP-binding. The homohexamer may adopt a ring conformation through which microtubules pass prior to being severed. Interacts with microtubules. Interacts with atl; may be involved in microtubule dynamics.

The protein localises to the membrane. It localises to the cytoplasm. It is found in the cytoskeleton. The protein resides in the microtubule organizing center. Its subcellular location is the centrosome. The protein localises to the chromosome. It localises to the lipid droplet. The enzyme catalyses n ATP + n H2O + a microtubule = n ADP + n phosphate + (n+1) alpha/beta tubulin heterodimers.. Its function is as follows. ATP-dependent microtubule severing protein. Stimulates microtubule minus-end depolymerization and poleward microtubule flux in the mitotic spindle. Regulates microtubule stability in the neuromuscular junction synapse. Involved in lipid metabolism by regulating the size and distribution of lipid droplets. Involved in axon regeneration by regulating microtubule severing. The sequence is that of Spastin from Drosophila melanogaster (Fruit fly).